The sequence spans 107 residues: Iron-binding protein IscA (107 aa).

Cysteine 35, cysteine 99, and cysteine 101 together coordinate Fe cation.

It belongs to the HesB/IscA family. Homodimer; may form tetramers and higher multimers. The cofactor is Fe cation.

Its function is as follows. Is able to transfer iron-sulfur clusters to apo-ferredoxin. Multiple cycles of [2Fe2S] cluster formation and transfer are observed, suggesting that IscA acts catalytically. Recruits intracellular free iron so as to provide iron for the assembly of transient iron-sulfur cluster in IscU in the presence of IscS, L-cysteine and the thioredoxin reductase system TrxA/TrxB. The sequence is that of Iron-binding protein IscA from Xenorhabdus nematophila (strain ATCC 19061 / DSM 3370 / CCUG 14189 / LMG 1036 / NCIMB 9965 / AN6).